The primary structure comprises 734 residues: Rho GTPase-activating protein gacL (734 aa).

In terms of domain architecture, Rho-GAP spans 141–339; the sequence is ISLDTLIAKE…QMILHYDTLF (199 aa). WD repeat units lie at residues 381–430, 539–579, and 585–623; these read GHNK…FIKE, LFMK…TIHQ, and KRPK…LEHK.

Its subcellular location is the cytoplasm. Its function is as follows. Rho GTPase-activating protein involved in the signal transduction pathway. This Dictyostelium discoideum (Social amoeba) protein is Rho GTPase-activating protein gacL (gacL).